Consider the following 133-residue polypeptide: Adenosine 5'-monophosphoramidase hnt1 (133 aa).

The region spanning 4–107 (IFCKIVKGDI…IPKPNEEYGL (104 aa)) is the HIT domain. Residues 29-30 (DI), asparagine 81, 87-89 (HQF), and 94-96 (HFH) contribute to the AMP site. Residues 92–96 (HVHFH) carry the Histidine triad motif motif. Histidine 94 (tele-AMP-histidine intermediate) is an active-site residue.

The protein belongs to the HINT family. In terms of assembly, homodimer. It depends on Mg(2+) as a cofactor.

The protein resides in the nucleus. It carries out the reaction adenosine 5'-phosphoramidate + H2O = AMP + NH4(+). Hydrolyzes adenosine 5'-monophosphoramidate substrates such as AMP-morpholidate, AMP-N-alanine methyl ester, AMP-alpha-acetyl lysine methyl ester and AMP-NH2. This Schizosaccharomyces pombe (strain 972 / ATCC 24843) (Fission yeast) protein is Adenosine 5'-monophosphoramidase hnt1 (hnt1).